Reading from the N-terminus, the 232-residue chain is uncharacterized protein (232 aa).

The next 5 membrane-spanning stretches (helical) occupy residues 69-91 (LISAIITMVLFSLLTPLMFYILF), 104-126 (FLEPTIYFILFLFGLHACIFFAL), 139-161 (FSRFGAFLIPFTAILILALFFFL), 166-188 (ICFTILAVGLIGAFFAIPPAMLS), and 200-219 (FIYSTIVIYLIICVTFQLII).

The protein resides in the cell membrane. This is an uncharacterized protein from Bacillus subtilis (strain 168).